The following is a 172-amino-acid chain: RNA pyrophosphohydrolase (172 aa).

Positions 6 to 149 (GYRLNVGIVI…KRDVYRRAMK (144 aa)) constitute a Nudix hydrolase domain. Residues 38-59 (GGIDDGETPEQAMFRELYEEVG) carry the Nudix box motif.

This sequence belongs to the Nudix hydrolase family. RppH subfamily. The cofactor is a divalent metal cation.

Accelerates the degradation of transcripts by removing pyrophosphate from the 5'-end of triphosphorylated RNA, leading to a more labile monophosphorylated state that can stimulate subsequent ribonuclease cleavage. The sequence is that of RNA pyrophosphohydrolase from Vibrio vulnificus (strain CMCP6).